Here is a 336-residue protein sequence, read N- to C-terminus: Sodium/bile acid cotransporter 7 (336 aa).

The Cytoplasmic portion of the chain corresponds to 1–10 (MGLIARVRKE). Residues 11-31 (WFIIGIVLVITFAKLQPSVGV) form a helical membrane-spanning segment. The Extracellular portion of the chain corresponds to 32–37 (KGGPLH). A helical transmembrane segment spans residues 38-58 (PEITITYVAVSVIFFNSGLSL). Topologically, residues 59 to 71 (KTEELASALMHVK) are cytoplasmic. Residues 72–92 (LHFFVQTFTLVFFPIAIWLLL) traverse the membrane as a helical segment. At 93–116 (KVLALTAINEWLLRGLQTVACMPP) the chain is on the extracellular side. A helical membrane pass occupies residues 117–137 (PVSSAVILTKAVGGNEAAAIF). Asparagine 138 is a topological domain (cytoplasmic). A helical membrane pass occupies residues 139 to 159 (SAFGSFLGIVVTPLLLLVFLG). Residues 160 to 163 (SSSS) are Extracellular-facing. The helical transmembrane segment at 164-184 (VPFTSIFSQLFMTVVVPLIVG) threads the bilayer. Topologically, residues 185–201 (QVCRRFLRECLDRRKPP) are cytoplasmic. The chain crosses the membrane as a helical span at residues 202 to 222 (FGAVSSVVLLMIIYSTFCDTF). Topologically, residues 223–233 (NNPNIELDHLS) are extracellular. A helical membrane pass occupies residues 234–254 (LLTVVFIIFSIQLSFMALIFF). Over 255–270 (LSTRKSSGFSAADSVA) the chain is Cytoplasmic. Residues 271 to 291 (IMFCATHKSLTLGIPMLKIVF) traverse the membrane as a helical segment. The Extracellular portion of the chain corresponds to 292 to 298 (EGYEHLS). A helical transmembrane segment spans residues 299–319 (LISVPLLIYHPAQILLGSVLL). At 320-336 (PSIKTWMSGRQKTLTPI) the chain is on the cytoplasmic side.

It belongs to the bile acid:sodium symporter (BASS) (TC 2.A.28) family.

It is found in the cell membrane. The protein resides in the endoplasmic reticulum membrane. Its subcellular location is the golgi apparatus membrane. Functionally, involved in teeth and skeletal development. Has an essential role in the biosynthesis and trafficking of glycosaminoglycans and glycoproteins to produce a proper functioning extracellular matrix. Required for extracellular matrix mineralization. Also involved in the regulation of cellular calcium homeostasis. Does not show transport activity towards bile acids or steroid sulfates. The protein is Sodium/bile acid cotransporter 7 (slc10a7) of Danio rerio (Zebrafish).